Here is a 541-residue protein sequence, read N- to C-terminus: Chaperonin GroEL 1 (541 aa).

ATP contacts are provided by residues 29–32 (TLGP), 86–90 (DGTTT), G413, 477–479 (NAA), and D493.

Belongs to the chaperonin (HSP60) family. As to quaternary structure, forms a cylinder of 14 subunits composed of two heptameric rings stacked back-to-back. Interacts with the co-chaperonin GroES.

Its subcellular location is the cytoplasm. The catalysed reaction is ATP + H2O + a folded polypeptide = ADP + phosphate + an unfolded polypeptide.. Together with its co-chaperonin GroES, plays an essential role in assisting protein folding. The GroEL-GroES system forms a nano-cage that allows encapsulation of the non-native substrate proteins and provides a physical environment optimized to promote and accelerate protein folding. The sequence is that of Chaperonin GroEL 1 from Paenarthrobacter aurescens (strain TC1).